Consider the following 62-residue polypeptide: Snaclec aspercetin subunit alpha (62 aa).

Cysteine 2 and cysteine 13 form a disulfide bridge. The C-type lectin domain maps to 9-62 (YEGHCYRFFHPPKDWADAERFCTEQAKGGALVSIQRFGEEDFVSNLITKNLQRG).

Belongs to the snaclec family. In terms of assembly, heterodimer; disulfide-linked. As to expression, expressed by the venom gland.

It is found in the secreted. Functionally, snaclec that binds to von Willebrand factor (VWF) and induces its interaction with GPIbalpha (GP1BA) (via the vWF A1 domain), resulting in platelet aggregation. Intravenous injection in mice induces a dose-dependent drop in platelet count (thrombocytopenia). Pretreatment by intravenous injection by this protein in mice potentiates the hemorrhagic lesion in the skin provoked by the metalloproteinase BaP1 intradermally injected. This result is not observed when both BaP1 and this protein are injected simultaneously. This is Snaclec aspercetin subunit alpha from Bothrops asper (Terciopelo).